We begin with the raw amino-acid sequence, 273 residues long: Zinc finger protein AZF2 (273 aa).

Positions 33 to 64 (LKRKRSKRQRSHSPSSSSSSPPRSRPKSQNQD) are disordered. A compositionally biased stretch (basic residues) spans 34–43 (KRKRSKRQRS). Residues 44 to 54 (HSPSSSSSSPP) show a composition bias toward low complexity. C2H2-type zinc fingers lie at residues 106–128 (YKCN…KASH) and 165–187 (HECS…KRCH). The tract at residues 195-215 (GGGGGSKSISHSGSVSSTVSE) is disordered. Positions 201-213 (KSISHSGSVSSTV) are enriched in low complexity.

As to expression, expressed in roots, radicles, cotyledons, hypocotyls, leaf veins, stems, sepals, petals, stamens, placenta, funiculi and maturated seeds.

It localises to the nucleus. Its function is as follows. Transcriptional repressor involved in the inhibition of plant growth under abiotic stress conditions. Can repress the expression of various genes, including osmotic stress and abscisic acid-repressive genes and auxin-inducible genes, by binding to their promoter regions in a DNA sequence-specific manner. Acts as a negative regulator of abscisic acid (ABA) signaling during seed germination. Probably involved in jasmonate (JA) early signaling response. May regulate the expression of the JA biosynthesis gene LOX3 and control the expression of TIFY10A/JAZ1, a key repressor in the JA signaling cascade. May act as a positive regulator of leaf senescence. Has been identified as a suppressor of the deficiency of yeast snf4 mutant to grow on non-fermentable carbon source. This chain is Zinc finger protein AZF2 (AZF2), found in Arabidopsis thaliana (Mouse-ear cress).